A 445-amino-acid chain; its full sequence is Homoserine dehydrogenase (445 aa).

3 residues coordinate NADPH: F26, T28, and V29. V29 and A58 together coordinate NAD(+). NADP(+) is bound at residue V29. K119 provides a ligand contact to NADPH. K119 is an NADP(+) binding site. E143, V146, G148, and I150 together coordinate Na(+). Residues G201 and E204 each coordinate NADP(+). L-homoserine is bound by residues E204 and D215. Residue K219 is the Proton donor of the active site. G321 contributes to the NADPH binding site. Residue G321 participates in NAD(+) binding. NADP(+) is bound at residue G321. The region spanning 368–445 (HLDMDVEDRV…INSVIRLERD (78 aa)) is the ACT domain.

Belongs to the homoserine dehydrogenase family. The cofactor is a metal cation.

It catalyses the reaction L-homoserine + NADP(+) = L-aspartate 4-semialdehyde + NADPH + H(+). The catalysed reaction is L-homoserine + NAD(+) = L-aspartate 4-semialdehyde + NADH + H(+). It functions in the pathway amino-acid biosynthesis; L-methionine biosynthesis via de novo pathway; L-homoserine from L-aspartate: step 3/3. It participates in amino-acid biosynthesis; L-threonine biosynthesis; L-threonine from L-aspartate: step 3/5. Its activity is regulated as follows. Feedback inhibition by threonine. In terms of biological role, catalyzes the conversion of L-aspartate-beta-semialdehyde (L-Asa) to L-homoserine (L-Hse), the third step in the biosynthesis of threonine and methionine from aspartate. The polypeptide is Homoserine dehydrogenase (hom) (Corynebacterium glutamicum (strain ATCC 13032 / DSM 20300 / JCM 1318 / BCRC 11384 / CCUG 27702 / LMG 3730 / NBRC 12168 / NCIMB 10025 / NRRL B-2784 / 534)).